Reading from the N-terminus, the 110-residue chain is Late cornified envelope protein 1A (110 aa).

The span at 1–10 (MSCQQSQQQC) shows a compositional bias: low complexity. Disordered stretches follow at residues 1–23 (MSCQQSQQQCQPPPKCTPKCPPK) and 83–110 (QSSGCCSQPSGGSSCCGGDSGQHSGGCC). The segment covering 11–23 (QPPPKCTPKCPPK) has biased composition (pro residues). Residues 83-95 (QSSGCCSQPSGGS) show a composition bias toward low complexity. A compositionally biased stretch (gly residues) spans 96–110 (SCCGGDSGQHSGGCC).

It belongs to the LCE family. Interacts with CYSRT1. As to expression, skin-specific. Expression was readily detected in adult trunk skin, adult arm skin, fetal skin, penal skin, vulva, esophagus and tongue. Not expressed in the cervix, rectum, lung, colon, or placenta.

Functionally, precursors of the cornified envelope of the stratum corneum. In Homo sapiens (Human), this protein is Late cornified envelope protein 1A (LCE1A).